The chain runs to 838 residues: P protein (838 aa).

At 1–179 (MHLEGRDGRR…KLRRCVQWLK (179 aa)) the chain is on the cytoplasmic side. 2 disordered regions span residues 38–60 (LPRG…GQSS) and 74–94 (KGRS…DSCF). The span at 78–87 (HSSLPQMSSS) shows a compositional bias: polar residues. A helical membrane pass occupies residues 180–197 (VMGLFAFVVLCSILFSLY). Topologically, residues 198–330 (PDQGKLWQLL…QYLRGSVETQ (133 aa)) are extracellular. Asparagine 214, asparagine 218, and asparagine 273 each carry an N-linked (GlcNAc...) asparagine glycan. The chain crosses the membrane as a helical span at residues 331-347 (VTIATAILAGVYALIIF). At 348–353 (EIVHRT) the chain is on the cytoplasmic side. Residues 354 to 370 (LAAMLGSLAALAALAVI) form a helical membrane-spanning segment. At 371–384 (GDRPSLTHVVEWID) the chain is on the extracellular side. A helical transmembrane segment spans residues 385 to 401 (FETLALLFGMMILVAIF). Topologically, residues 402 to 423 (SETGFFDYCAVKAYRLSRGRVW) are cytoplasmic. A helical membrane pass occupies residues 424 to 440 (AMIIMLCLIAAVLSAFL). The Extracellular portion of the chain corresponds to 441-513 (DNVTTMLLFT…DFAGFTAHMF (73 aa)). N-linked (GlcNAc...) asparagine glycosylation is present at asparagine 442. A helical membrane pass occupies residues 514-530 (IGICLVLLVCFPLLRLL). The Cytoplasmic portion of the chain corresponds to 531–620 (YWNRKLYNKE…LQKKHRISDG (90 aa)). A helical membrane pass occupies residues 621 to 637 (ILLAKCLTVLGFVIFMF). Topologically, residues 638–647 (FLNSFVPGIH) are extracellular. The helical transmembrane segment at 648-664 (LDLGWIAILGAIWLLIL) threads the bilayer. Topologically, residues 665–679 (ADIHDFEIILHRVEW) are cytoplasmic. The chain crosses the membrane as a helical span at residues 680–696 (ATLLFFAALFVLMEALA). Residues 697-720 (HLHLIEYVGEQTALLIKMVPEEQR) lie on the Extracellular side of the membrane. The helical transmembrane segment at 721–737 (LIAAIVLVVWVSALASS) threads the bilayer. At 738–760 (LIDNIPFTATMIPVLLNLSHDPE) the chain is on the cytoplasmic side. The helical transmembrane segment at 761–777 (VGLPAPPLMYALAFGAC) threads the bilayer. Residues 778–817 (LGGNGTLIGASANVVCAGIAEQHGYGFSFMEFFRLGFPMM) are Extracellular-facing. Asparagine 781 carries N-linked (GlcNAc...) asparagine glycosylation. Residues 818-834 (VVSCTVGMCYLLVAHVV) form a helical membrane-spanning segment. At 835–838 (VGWN) the chain is on the cytoplasmic side.

It belongs to the CitM (TC 2.A.11) transporter family. Expressed in melanocytes and retinal pigment epithelium.

The protein localises to the melanosome membrane. The catalysed reaction is chloride(in) = chloride(out). In terms of biological role, contributes to a melanosome-specific anion (chloride) current that modulates melanosomal pH for optimal tyrosinase activity required for melanogenesis and the melanosome maturation. One of the components of the mammalian pigmentary system. May serve as a key control point at which ethnic skin color variation is determined. Major determinant of brown and/or blue eye color. Seems to regulate the post-translational processing of tyrosinase, which catalyzes the limiting reaction in melanin synthesis. The chain is P protein from Homo sapiens (Human).